Consider the following 191-residue polypeptide: Glutathione S-transferase Y-2 (191 aa).

Residues 2 to 80 enclose the GST N-terminal domain; that stretch reads TFATVYIKPH…YIVAKGSKPE (79 aa). Positions 85–191 constitute a GST C-terminal domain; it reads TTEERATNTR…VSQHPIIKNM (107 aa).

This sequence belongs to the GST superfamily.

The catalysed reaction is RX + glutathione = an S-substituted glutathione + a halide anion + H(+). In terms of biological role, conjugation of reduced glutathione to a wide number of exogenous and endogenous hydrophobic electrophiles. This chain is Glutathione S-transferase Y-2 (GSTY2), found in Pichia kudriavzevii (Yeast).